We begin with the raw amino-acid sequence, 221 residues long: Small ribosomal subunit protein uS2 (221 aa).

Positions 202–221 (KVKMPQQNQRGRPQRRFQRR) are disordered.

Belongs to the universal ribosomal protein uS2 family.

This chain is Small ribosomal subunit protein uS2, found in Methanococcus vannielii (strain ATCC 35089 / DSM 1224 / JCM 13029 / OCM 148 / SB).